The following is a 252-amino-acid chain: Sulfate transporter CysZ (252 aa).

5 helical membrane-spanning segments follow: residues 29 to 49 (FVLL…FYIF), 66 to 86 (FLSW…LATF), 141 to 160 (LVYI…IPAL), 164 to 186 (VAPF…DYPF), and 212 to 232 (ALVS…PVAV).

This sequence belongs to the CysZ family.

It localises to the cell inner membrane. In terms of biological role, high affinity, high specificity proton-dependent sulfate transporter, which mediates sulfate uptake. Provides the sulfur source for the cysteine synthesis pathway. In Vibrio atlanticus (strain LGP32) (Vibrio splendidus (strain Mel32)), this protein is Sulfate transporter CysZ.